The sequence spans 430 residues: Enolase (430 aa).

Glutamine 165 contacts (2R)-2-phosphoglycerate. Glutamate 207 (proton donor) is an active-site residue. Aspartate 244, glutamate 287, and aspartate 314 together coordinate Mg(2+). (2R)-2-phosphoglycerate-binding residues include lysine 339, arginine 368, serine 369, and lysine 390. The active-site Proton acceptor is the lysine 339.

This sequence belongs to the enolase family. Component of the RNA degradosome, a multiprotein complex involved in RNA processing and mRNA degradation. Mg(2+) is required as a cofactor.

The protein resides in the cytoplasm. It is found in the secreted. Its subcellular location is the cell surface. The enzyme catalyses (2R)-2-phosphoglycerate = phosphoenolpyruvate + H2O. The protein operates within carbohydrate degradation; glycolysis; pyruvate from D-glyceraldehyde 3-phosphate: step 4/5. Functionally, catalyzes the reversible conversion of 2-phosphoglycerate (2-PG) into phosphoenolpyruvate (PEP). It is essential for the degradation of carbohydrates via glycolysis. The sequence is that of Enolase from Xanthomonas euvesicatoria pv. vesicatoria (strain 85-10) (Xanthomonas campestris pv. vesicatoria).